Reading from the N-terminus, the 103-residue chain is Urease subunit beta (103 aa).

This sequence belongs to the urease beta subunit family. As to quaternary structure, heterotrimer of UreA (gamma), UreB (beta) and UreC (alpha) subunits. Three heterotrimers associate to form the active enzyme.

Its subcellular location is the cytoplasm. It carries out the reaction urea + 2 H2O + H(+) = hydrogencarbonate + 2 NH4(+). The protein operates within nitrogen metabolism; urea degradation; CO(2) and NH(3) from urea (urease route): step 1/1. In terms of biological role, ureolysis may allow urea to be employed as a nitrogen source for growth and produces ammonia which may protect from killing at low pH. This Streptococcus salivarius (strain 57.I) protein is Urease subunit beta.